The primary structure comprises 899 residues: Alanine--tRNA ligase (899 aa).

4 residues coordinate Zn(2+): histidine 595, histidine 599, cysteine 703, and histidine 707.

The protein belongs to the class-II aminoacyl-tRNA synthetase family. Zn(2+) is required as a cofactor.

The protein localises to the cytoplasm. It carries out the reaction tRNA(Ala) + L-alanine + ATP = L-alanyl-tRNA(Ala) + AMP + diphosphate. Functionally, catalyzes the attachment of alanine to tRNA(Ala) in a two-step reaction: alanine is first activated by ATP to form Ala-AMP and then transferred to the acceptor end of tRNA(Ala). Also edits incorrectly charged Ser-tRNA(Ala) and Gly-tRNA(Ala) via its editing domain. In Caldivirga maquilingensis (strain ATCC 700844 / DSM 13496 / JCM 10307 / IC-167), this protein is Alanine--tRNA ligase.